A 758-amino-acid chain; its full sequence is Probable ubiquitin carboxyl-terminal hydrolase creB (758 aa).

Residues 1-27 form a disordered region; that stretch reads MGSFLRSFRRDVGSSTPSVGATPAKKE. The USP domain maps to 57-468; the sequence is FGMENYGNTC…CAYVLFYQET (412 aa). The active-site Nucleophile is the cysteine 66. Disordered regions lie at residues 116 to 148 and 243 to 268; these read AEAQ…DSSE and QPIP…SKTP. Residues 253-268 are compositionally biased toward polar residues; the sequence is TTDSSRQSISSGSKTP. The Proton acceptor role is filled by histidine 419. The segment at 514–744 is disordered; sequence IPVQDEPQRH…KGDRAGHGKW (231 aa). Residues 554–563 are compositionally biased toward pro residues; it reads ATPPPVPPIP. Residues 573-631 adopt a coiled-coil conformation; the sequence is KKSDIQSKKERAKEEKERKAAEKEMEKQRRKEQEARVKENQRREEAELKAALEASKASK. Composition is skewed to basic and acidic residues over residues 573–650 and 729–740; these read KKSD…DPKR and DALKSPKGDRAG.

Belongs to the peptidase C19 family. Interacts with creA, creC and qutD.

The catalysed reaction is Thiol-dependent hydrolysis of ester, thioester, amide, peptide and isopeptide bonds formed by the C-terminal Gly of ubiquitin (a 76-residue protein attached to proteins as an intracellular targeting signal).. Its function is as follows. Ubiquitin thioesterase component of the regulatory network controlling carbon source utilization through ubiquitination and deubiquitination involving creA, creB, creC, creD and acrB. Deubiquitinates the creA catabolic repressor and the quinate permease qutD. Also plays a role in response to carbon starvation and the control of extracellular proteases activity. This is Probable ubiquitin carboxyl-terminal hydrolase creB (creB) from Aspergillus niger (strain ATCC MYA-4892 / CBS 513.88 / FGSC A1513).